The chain runs to 311 residues: Aspartate carbamoyltransferase catalytic subunit (311 aa).

Residues Arg-55 and Thr-56 each coordinate carbamoyl phosphate. Residue Lys-83 participates in L-aspartate binding. Carbamoyl phosphate-binding residues include Arg-105, His-133, and Gln-136. 2 residues coordinate L-aspartate: Arg-166 and Arg-220. Positions 261 and 262 each coordinate carbamoyl phosphate.

Belongs to the aspartate/ornithine carbamoyltransferase superfamily. ATCase family. As to quaternary structure, heterododecamer (2C3:3R2) of six catalytic PyrB chains organized as two trimers (C3), and six regulatory PyrI chains organized as three dimers (R2).

The enzyme catalyses carbamoyl phosphate + L-aspartate = N-carbamoyl-L-aspartate + phosphate + H(+). It functions in the pathway pyrimidine metabolism; UMP biosynthesis via de novo pathway; (S)-dihydroorotate from bicarbonate: step 2/3. Its function is as follows. Catalyzes the condensation of carbamoyl phosphate and aspartate to form carbamoyl aspartate and inorganic phosphate, the committed step in the de novo pyrimidine nucleotide biosynthesis pathway. This Chlorobium chlorochromatii (strain CaD3) protein is Aspartate carbamoyltransferase catalytic subunit.